A 432-amino-acid chain; its full sequence is Protein prenyltransferase alpha subunit repeat-containing protein 1-A (432 aa).

PFTA repeat units lie at residues glutamate 86 to proline 119, lysine 121 to leucine 154, glutamate 179 to lysine 212, aspartate 218 to threonine 251, glutamate 294 to leucine 327, and serine 395 to histidine 432.

This sequence belongs to the protein prenyltransferase subunit alpha family.

The sequence is that of Protein prenyltransferase alpha subunit repeat-containing protein 1-A (ptar1-a) from Xenopus laevis (African clawed frog).